The primary structure comprises 124 residues: Protein YebF (124 aa).

The signal sequence occupies residues 1–27; the sequence is MKTCHIINRVGLSGVALLLTVSFTVSA. One can recognise a YebF/Cmi domain in the interval 36 to 123; it reads KFISCDNLTK…QQNTISYSEL (88 aa). The cysteines at positions 40 and 113 are disulfide-linked.

Belongs to the YebF family.

It is found in the secreted. The chain is Protein YebF from Photorhabdus laumondii subsp. laumondii (strain DSM 15139 / CIP 105565 / TT01) (Photorhabdus luminescens subsp. laumondii).